We begin with the raw amino-acid sequence, 300 residues long: 1D-myo-inositol 2-acetamido-2-deoxy-alpha-D-glucopyranoside deacetylase (300 aa).

Residues H13, D16, and H147 each coordinate Zn(2+).

It belongs to the MshB deacetylase family. Zn(2+) serves as cofactor.

It catalyses the reaction 1D-myo-inositol 2-acetamido-2-deoxy-alpha-D-glucopyranoside + H2O = 1D-myo-inositol 2-amino-2-deoxy-alpha-D-glucopyranoside + acetate. Catalyzes the deacetylation of 1D-myo-inositol 2-acetamido-2-deoxy-alpha-D-glucopyranoside (GlcNAc-Ins) in the mycothiol biosynthesis pathway. This Mycolicibacterium paratuberculosis (strain ATCC BAA-968 / K-10) (Mycobacterium paratuberculosis) protein is 1D-myo-inositol 2-acetamido-2-deoxy-alpha-D-glucopyranoside deacetylase.